The sequence spans 99 residues: MNPANYLILSGLLFTIGATGVLVRRNAIVVFMSIELMLNAVNLTLVTFSRIHGTLEGQIMAFFVMVVAAAEVVVGLAIILAIFRTRRSASVDDVNLLKY.

Helical transmembrane passes span 3 to 23 (PANY…GVLV), 28 to 48 (IVVF…LVTF), and 62 to 82 (FFVM…ILAI).

Belongs to the complex I subunit 4L family. In terms of assembly, NDH-1 is composed of 14 different subunits. Subunits NuoA, H, J, K, L, M, N constitute the membrane sector of the complex.

The protein localises to the cell membrane. The enzyme catalyses a quinone + NADH + 5 H(+)(in) = a quinol + NAD(+) + 4 H(+)(out). Its function is as follows. NDH-1 shuttles electrons from NADH, via FMN and iron-sulfur (Fe-S) centers, to quinones in the respiratory chain. The immediate electron acceptor for the enzyme in this species is believed to be a menaquinone. Couples the redox reaction to proton translocation (for every two electrons transferred, four hydrogen ions are translocated across the cytoplasmic membrane), and thus conserves the redox energy in a proton gradient. This Parafrankia sp. (strain EAN1pec) protein is NADH-quinone oxidoreductase subunit K.